Consider the following 409-residue polypeptide: Broad specificity amino-acid racemase (409 aa).

A signal peptide spans M1 to A25. Residues C72 and C98 are joined by a disulfide bond. The active-site Proton acceptor is the K76. K76 carries the N6-(pyridoxal phosphate)lysine modification. Residue R175 participates in substrate binding. The active-site Proton acceptor is the Y301. M349 contacts substrate.

This sequence belongs to the alanine racemase family. Bsr subfamily. Requires pyridoxal 5'-phosphate as cofactor.

The protein resides in the periplasm. It catalyses the reaction an L-alpha-amino acid = a D-alpha-amino acid. It carries out the reaction L-lysine = D-lysine. The catalysed reaction is L-arginine = D-arginine. Its function is as follows. Amino-acid racemase able to utilize a broad range of substrates. The sequence is that of Broad specificity amino-acid racemase from Vibrio parahaemolyticus serotype O3:K6 (strain RIMD 2210633).